Reading from the N-terminus, the 985-residue chain is Eukaryotic translation initiation factor 4E transporter (985 aa).

The tract at residues 1–24 (MDRRSMGETESGDAFLDLKKPPAS) is disordered. S5 bears the Phosphoserine mark. Positions 30–36 (YTKEELL) match the YXXXXLphi motif motif. S74, S78, S115, S120, S136, and S138 each carry phosphoserine. The interaction with CSDE1 stretch occupies residues 131 to 161 (VSSRRSGSPLEKDSDGLRLLGGRRIGSGRII). The short motif at 195 to 211 (RREFGDSKRVFGERRRN) is the Nuclear localization signal element. The tract at residues 208-230 (RRRNDSYTEEEPEWFSAGPTSQS) is disordered. Residues 219-240 (PEWFSAGPTSQSETIELTGFDD) form an interaction with DDX6 region. Phosphoserine is present on residues S301, S345, S353, and S374. Residue K410 forms a Glycyl lysine isopeptide (Lys-Gly) (interchain with G-Cter in SUMO2) linkage. S417 is subject to Phosphoserine. The short motif at 438–447 (VEAGLKGLKV) is the Nuclear export signal element. Positions 448–490 (DQQVKNSTPFMAEHLEETLSAVTNNRQLKKDGDMTAFNKLVST) are interaction with LSM14A. The residue at position 486 (K486) is an N6-acetyllysine. Residues S513, S564, and S587 each carry the phosphoserine modification. The Nuclear export signal motif lies at 613–638 (ITAQMSQLELQQAALEGLALPHDLAV). 2 disordered regions span residues 664–693 (QQRV…SMLS) and 707–803 (ESKE…PTTP). The residue at position 693 (S693) is a Phosphoserine. An interaction with PATL1 region spans residues 695–713 (SFTPTSVIRKMYESKEKSK). 2 stretches are compositionally biased toward basic and acidic residues: residues 707-717 (ESKEKSKEEPA) and 725-735 (DSKEDTQKASE). The segment covering 736-746 (ENLLSSSSVPS) has biased composition (low complexity). The residue at position 752 (S752) is a Phosphoserine. Residues 754–776 (TTNSKLSALQRSSCSTPLSQANR) show a composition bias toward polar residues. Residues S920 and S951 each carry the phosphoserine modification. The tract at residues 922–953 (QTTPQNVPSRSGLPHMHSQLEHRPSQRSSSPV) is disordered. An interaction with LSM14A region spans residues 940–985 (QLEHRPSQRSSSPVGLAKWFGSDVLQQPLPSMPAKVISVDELEYRQ).

The protein belongs to the 4E-T/EIF4E-T family. In terms of assembly, interacts (via YXXXXLphi motif) with EIF4E. Interacts (via YXXXXLphi motif) with EIF4E2. Interacts with DDX6. Interacts with CSDE1/UNR. Interacts with CNOT1; promoting association with the CCR4-NOT complex. Interacts with LSM14A; promoting EIF4ENIF1 localization to P-bodies. Interacts with PATL1. Interacts with importin beta only in the presence of importin alpha, suggesting a direct interaction with importin alpha. Interacts with APOBEC3G in an RNA-dependent manner. Phosphorylation by MAPK8/JNK1 and or MAPK9/JNK2 in response to oxidative stress promotes P-body assembly. Phosphorylated during meiotic maturation. Widely expressed.

It is found in the cytoplasm. The protein resides in the P-body. The protein localises to the nucleus. Its subcellular location is the PML body. It localises to the nucleus speckle. EIF4E-binding protein that regulates translation and stability of mRNAs in processing bodies (P-bodies). Plays a key role in P-bodies to coordinate the storage of translationally inactive mRNAs in the cytoplasm and prevent their degradation. Acts as a binding platform for multiple RNA-binding proteins: promotes deadenylation of mRNAs via its interaction with the CCR4-NOT complex, and blocks decapping via interaction with eIF4E (EIF4E and EIF4E2), thereby protecting deadenylated and repressed mRNAs from degradation. Component of a multiprotein complex that sequesters and represses translation of proneurogenic factors during neurogenesis. Promotes miRNA-mediated translational repression. Required for the formation of P-bodies. Involved in mRNA translational repression mediated by the miRNA effector TNRC6B by protecting TNRC6B-targeted mRNAs from decapping and subsequent decay. Also acts as a nucleoplasmic shuttling protein, which mediates the nuclear import of EIF4E and DDX6 by a piggy-back mechanism. The polypeptide is Eukaryotic translation initiation factor 4E transporter (Homo sapiens (Human)).